A 217-amino-acid chain; its full sequence is Meiotically up-regulated gene 37 protein (217 aa).

Has a role in meiosis. This chain is Meiotically up-regulated gene 37 protein (mug37), found in Schizosaccharomyces pombe (strain 972 / ATCC 24843) (Fission yeast).